We begin with the raw amino-acid sequence, 557 residues long: DNA ligase B (557 aa).

Catalysis depends on Lys-125, which acts as the N6-AMP-lysine intermediate.

Belongs to the NAD-dependent DNA ligase family. LigB subfamily.

It carries out the reaction NAD(+) + (deoxyribonucleotide)n-3'-hydroxyl + 5'-phospho-(deoxyribonucleotide)m = (deoxyribonucleotide)n+m + AMP + beta-nicotinamide D-nucleotide.. Its function is as follows. Catalyzes the formation of phosphodiester linkages between 5'-phosphoryl and 3'-hydroxyl groups in double-stranded DNA using NAD as a coenzyme and as the energy source for the reaction. This is DNA ligase B from Pseudomonas entomophila (strain L48).